Consider the following 527-residue polypeptide: Protein Lilipod (527 aa).

Residues Met-1–Arg-22 lie on the Extracellular side of the membrane. Residues Glu-23 to Ser-43 form a helical membrane-spanning segment. Residues Arg-44 to Arg-65 are Cytoplasmic-facing. The helical transmembrane segment at Ile-66–Pro-86 threads the bilayer. The Extracellular portion of the chain corresponds to Val-87–Asn-117. Residues His-118–Ser-138 form a helical membrane-spanning segment. Residues Glu-139–Val-160 lie on the Cytoplasmic side of the membrane. The chain crosses the membrane as a helical span at residues Phe-161–Ile-181. The Extracellular portion of the chain corresponds to Glu-182 to Ser-194. The helical transmembrane segment at Val-195–Cys-215 threads the bilayer. Residues Thr-216–Thr-341 are Cytoplasmic-facing. A helical membrane pass occupies residues Phe-342–Val-362. At Val-363–Pro-395 the chain is on the extracellular side. Residues Phe-396–Phe-416 traverse the membrane as a helical segment. Residues Tyr-417–Ser-433 are Cytoplasmic-facing. A helical transmembrane segment spans residues Leu-434 to Leu-454. Topologically, residues Ser-455–Asp-468 are extracellular. The chain crosses the membrane as a helical span at residues Phe-469–Gly-489. The Cytoplasmic segment spans residues Thr-490–Asn-527.

This sequence belongs to the LIMR family. As to expression, in the ovary, detected in germline stem cells and their progeny. Also detected in the somatic follicular epithelium.

Its subcellular location is the cell membrane. Required during oogenesis to promote self-renewal of germline stem cells, probably by enhancing BMP signaling activity. The sequence is that of Protein Lilipod from Drosophila melanogaster (Fruit fly).